A 145-amino-acid chain; its full sequence is Large ribosomal subunit protein bL19 (145 aa).

Belongs to the bacterial ribosomal protein bL19 family.

This protein is located at the 30S-50S ribosomal subunit interface and may play a role in the structure and function of the aminoacyl-tRNA binding site. The protein is Large ribosomal subunit protein bL19 of Brucella abortus (strain S19).